The chain runs to 911 residues: Protein transport protein SEC24-1 (911 aa).

Low complexity predominate over residues Gln-108 to Pro-123. Positions Gln-108–Met-130 are disordered. Zn(2+)-binding residues include Cys-226, Cys-229, Cys-248, and Cys-251. The interval Cys-226–Cys-251 is zinc finger-like.

The protein belongs to the SEC23/SEC24 family. SEC24 subfamily. In terms of assembly, the COPII coat is composed of at least 5 proteins: the SEC23/24 complex, the SEC13/31 complex, and the protein SAR1. Golgi apparatus membrane; Peripheral membrane protein; Cytoplasmic side.

It localises to the cytoplasm. The protein localises to the cytoplasmic vesicle. Its subcellular location is the COPII-coated vesicle membrane. It is found in the endoplasmic reticulum membrane. The protein resides in the golgi apparatus membrane. Component of the coat protein complex II (COPII) which promotes the formation of transport vesicles from the endoplasmic reticulum (ER). The coat has two main functions, the physical deformation of the endoplasmic reticulum membrane into vesicles and the selection of cargo molecules. This chain is Protein transport protein SEC24-1 (SEC241), found in Naumovozyma castellii (Yeast).